A 380-amino-acid polypeptide reads, in one-letter code: Probable cytosolic iron-sulfur protein assembly protein 1 (380 aa).

WD repeat units lie at residues 10 to 49 (AHND…KFPL), 56 to 108 (THKR…VEYD), 135 to 175 (GHEN…EEFE), 182 to 221 (DHSQ…DEWS), 228 to 275 (GHEG…EEDK), 299 to 338 (VHKY…KWVI), and 346 to 380 (HGVH…LWNV).

The protein belongs to the WD repeat CIA1 family. In terms of assembly, interacts with NAR1.

The protein localises to the cytoplasm. It localises to the nucleus. Functionally, essential component of the cytosolic iron-sulfur (Fe/S) protein assembly machinery. Required for the maturation of extramitochondrial Fe/S proteins. This chain is Probable cytosolic iron-sulfur protein assembly protein 1, found in Candida dubliniensis (strain CD36 / ATCC MYA-646 / CBS 7987 / NCPF 3949 / NRRL Y-17841) (Yeast).